Here is a 586-residue protein sequence, read N- to C-terminus: Phosphomethylpyrimidine synthase (586 aa).

Residues 1–59 (MKQSVSAEQIELKSSLPGSKKVYVDGPREGMKVPMREIEQSETNGVPNPPIRVYDTSGP) form a disordered region. Positions 22 to 39 (VYVDGPREGMKVPMREIE) are enriched in basic and acidic residues. Substrate-binding positions include Asn-193, Met-222, Tyr-251, His-287, 307-309 (SRG), 348-351 (DGLR), and Glu-387. His-391 contributes to the Zn(2+) binding site. Tyr-414 lines the substrate pocket. His-455 is a Zn(2+) binding site. Residues Cys-535, Cys-538, and Cys-543 each coordinate [4Fe-4S] cluster.

This sequence belongs to the ThiC family. Requires [4Fe-4S] cluster as cofactor.

It catalyses the reaction 5-amino-1-(5-phospho-beta-D-ribosyl)imidazole + S-adenosyl-L-methionine = 4-amino-2-methyl-5-(phosphooxymethyl)pyrimidine + CO + 5'-deoxyadenosine + formate + L-methionine + 3 H(+). It participates in cofactor biosynthesis; thiamine diphosphate biosynthesis. Its function is as follows. Catalyzes the synthesis of the hydroxymethylpyrimidine phosphate (HMP-P) moiety of thiamine from aminoimidazole ribotide (AIR) in a radical S-adenosyl-L-methionine (SAM)-dependent reaction. This is Phosphomethylpyrimidine synthase from Bacillus cereus (strain ATCC 14579 / DSM 31 / CCUG 7414 / JCM 2152 / NBRC 15305 / NCIMB 9373 / NCTC 2599 / NRRL B-3711).